The sequence spans 77 residues: Large ribosomal subunit protein eL20 (77 aa).

The protein belongs to the eukaryotic ribosomal protein eL20 family. As to quaternary structure, part of the 50S ribosomal subunit. Binds 23S rRNA.

The protein is Large ribosomal subunit protein eL20 of Thermococcus gammatolerans (strain DSM 15229 / JCM 11827 / EJ3).